The sequence spans 478 residues: Ankyrin repeat and BTB/POZ domain-containing protein 1 (478 aa).

ANK repeat units lie at residues 1–31 (MDTS…EVNV) and 35–64 (WDST…RCEA). 2 consecutive BTB domains span residues 115–182 (SDVV…DIGV) and 272–346 (PDIC…ELPP). The stretch at 451 to 477 (VQTYSAIEEAQQRLRALEDLLVSIGLD) forms a coiled coil.

The protein localises to the cytoplasm. In terms of biological role, may act as a mediator of the PTEN growth-suppressive signaling pathway. May play a role in developmental processes. The sequence is that of Ankyrin repeat and BTB/POZ domain-containing protein 1 from Mus musculus (Mouse).